We begin with the raw amino-acid sequence, 69 residues long: Sec-independent protein translocase protein TatA (69 aa).

A helical transmembrane segment spans residues 1–21 (MFPKLGMGELVVILLIVVILF). Positions 43-69 (SFSGEDEEKPSTPGATSSDEASKAKQA) are disordered.

This sequence belongs to the TatA/E family. In terms of assembly, the Tat system comprises two distinct complexes: a TatABC complex, containing multiple copies of TatA, TatB and TatC subunits, and a separate TatA complex, containing only TatA subunits. Substrates initially bind to the TatABC complex, which probably triggers association of the separate TatA complex to form the active translocon.

The protein localises to the cell inner membrane. Functionally, part of the twin-arginine translocation (Tat) system that transports large folded proteins containing a characteristic twin-arginine motif in their signal peptide across membranes. TatA could form the protein-conducting channel of the Tat system. The chain is Sec-independent protein translocase protein TatA from Anaeromyxobacter sp. (strain Fw109-5).